The primary structure comprises 285 residues: Probable ribosomal RNA small subunit methyltransferase A (285 aa).

The S-adenosyl-L-methionine site is built by histidine 29, leucine 31, glycine 58, glutamate 79, aspartate 107, and asparagine 122.

The protein belongs to the class I-like SAM-binding methyltransferase superfamily. rRNA adenine N(6)-methyltransferase family. RsmA subfamily.

It is found in the cytoplasm. Its function is as follows. Specifically dimethylates two adjacent adenosines in the loop of a conserved hairpin near the 3'-end of 16S rRNA in the 30S particle. May play a critical role in biogenesis of 30S subunits. The chain is Probable ribosomal RNA small subunit methyltransferase A from Haloarcula marismortui (strain ATCC 43049 / DSM 3752 / JCM 8966 / VKM B-1809) (Halobacterium marismortui).